We begin with the raw amino-acid sequence, 218 residues long: NAD(P)H-quinone oxidoreductase subunit I (218 aa).

4Fe-4S ferredoxin-type domains follow at residues 55 to 84 (GRIH…VDWV) and 95 to 124 (RNYS…MTEE). [4Fe-4S] cluster is bound by residues Cys-64, Cys-67, Cys-70, Cys-74, Cys-104, Cys-107, Cys-110, and Cys-114. The disordered stretch occupies residues 169-218 (MDPHDVPANQPRAGQLPAEALKSLSLQQESVQGDEGESLQDASDQDQPSG). Residues 208 to 218 (QDASDQDQPSG) show a composition bias toward polar residues.

This sequence belongs to the complex I 23 kDa subunit family. As to quaternary structure, NDH-1 is composed of at least 11 different subunits. It depends on [4Fe-4S] cluster as a cofactor.

It is found in the cellular thylakoid membrane. It catalyses the reaction a plastoquinone + NADH + (n+1) H(+)(in) = a plastoquinol + NAD(+) + n H(+)(out). The enzyme catalyses a plastoquinone + NADPH + (n+1) H(+)(in) = a plastoquinol + NADP(+) + n H(+)(out). Functionally, NDH-1 shuttles electrons from an unknown electron donor, via FMN and iron-sulfur (Fe-S) centers, to quinones in the respiratory and/or the photosynthetic chain. The immediate electron acceptor for the enzyme in this species is believed to be plastoquinone. Couples the redox reaction to proton translocation, and thus conserves the redox energy in a proton gradient. The polypeptide is NAD(P)H-quinone oxidoreductase subunit I (Prochlorococcus marinus (strain MIT 9313)).